The following is a 141-amino-acid chain: Small ribosomal subunit protein eS17z (141 aa).

The protein belongs to the eukaryotic ribosomal protein eS17 family.

The polypeptide is Small ribosomal subunit protein eS17z (RPS17A) (Arabidopsis thaliana (Mouse-ear cress)).